The sequence spans 1021 residues: Probable LRR receptor-like serine/threonine-protein kinase RFK1 (1021 aa).

Positions Met1–Ala39 are cleaved as a signal peptide. The Extracellular segment spans residues Lys41–Tyr625. The N-linked (GlcNAc...) asparagine glycan is linked to Asn96. LRR repeat units follow at residues Asp99–Leu122 and Pro123–Ser146. Residues Asn136, Asn147, and Asn168 are each glycosylated (N-linked (GlcNAc...) asparagine). LRR repeat units lie at residues Leu148–Asn168, Ser169–Leu192, Val193–Leu216, Asn218–Trp240, and Lys241–Asn266. N-linked (GlcNAc...) asparagine glycosylation is present at Asn218. N-linked (GlcNAc...) asparagine glycosylation is found at Asn287 and Asn300. LRR repeat units follow at residues Val288 to Leu312, Lys313 to Glu336, Leu338 to Asp359, and Ile361 to Arg381. N-linked (GlcNAc...) asparagine glycans are attached at residues Asn486 and Asn512. Residues Ile626–Cys646 traverse the membrane as a helical segment. Over Gly647–Pro1021 the chain is Cytoplasmic. Thr670 carries the phosphothreonine modification. The 276-residue stretch at Phe681–Tyr956 folds into the Protein kinase domain. Residues Ile687 to Val695 and Lys709 each bind ATP. Tyr754 carries the phosphotyrosine modification. Asp807 serves as the catalytic Proton acceptor. At Ser840 the chain carries Phosphoserine. A phosphothreonine mark is found at Thr841 and Thr846. A Phosphotyrosine modification is found at Tyr854. The segment at Glu985 to Pro1021 is disordered. Over residues Ser993 to Ser1005 the composition is skewed to low complexity. Basic and acidic residues predominate over residues Gln1012–Pro1021.

The protein belongs to the protein kinase superfamily. Ser/Thr protein kinase family. In terms of tissue distribution, mostly expressed in flower buds, especially in stamens.

It is found in the membrane. The enzyme catalyses L-seryl-[protein] + ATP = O-phospho-L-seryl-[protein] + ADP + H(+). The catalysed reaction is L-threonyl-[protein] + ATP = O-phospho-L-threonyl-[protein] + ADP + H(+). This chain is Probable LRR receptor-like serine/threonine-protein kinase RFK1 (RKF1), found in Arabidopsis thaliana (Mouse-ear cress).